A 338-amino-acid chain; its full sequence is S-adenosylmethionine:tRNA ribosyltransferase-isomerase (338 aa).

It belongs to the QueA family. Monomer.

It is found in the cytoplasm. The catalysed reaction is 7-aminomethyl-7-carbaguanosine(34) in tRNA + S-adenosyl-L-methionine = epoxyqueuosine(34) in tRNA + adenine + L-methionine + 2 H(+). The protein operates within tRNA modification; tRNA-queuosine biosynthesis. Its function is as follows. Transfers and isomerizes the ribose moiety from AdoMet to the 7-aminomethyl group of 7-deazaguanine (preQ1-tRNA) to give epoxyqueuosine (oQ-tRNA). This is S-adenosylmethionine:tRNA ribosyltransferase-isomerase from Francisella philomiragia subsp. philomiragia (strain ATCC 25017 / CCUG 19701 / FSC 153 / O#319-036).